Reading from the N-terminus, the 259-residue chain is DNA-directed RNA polymerase 30 kDa polypeptide (259 aa).

The TFIIS-type zinc finger occupies 155 to 195 (YNTPCPNCKSRNTTPMMIQTRAADEPPLVRHACRDCKQHFK). 4 residues coordinate Zn(2+): cysteine 159, cysteine 162, cysteine 187, and cysteine 190. The interval 220–259 (EILPDNNPSPPESPEPASPIDDGLIRATFDRNDEPPEDDE) is disordered. Residues 226–236 (NPSPPESPEPA) show a composition bias toward pro residues.

This sequence belongs to the poxviridae DNA-directed RNA polymerase 30 kDa subunit family. The DNA-dependent RNA polymerase (vRNAP) consists of eight subunits encoded by early viral genes and termed according to their apparent molecular masses Rpo147, Rpo132, Rpo35, Rpo30, Rpo22, Rpo19, Rpo18, and Rpo7. The same holoenzyme, with the addition of the transcription-specificity factor RAP94, is used for early gene expression.

Its subcellular location is the virion. The protein resides in the host cytoplasm. It catalyses the reaction RNA(n) + a ribonucleoside 5'-triphosphate = RNA(n+1) + diphosphate. In terms of biological role, part of the DNA-dependent RNA polymerase which catalyzes the transcription of viral DNA into RNA using the four ribonucleoside triphosphates as substrates. Responsible for the transcription of early, intermediate and late genes. DNA-dependent RNA polymerase associates with the early transcription factor (ETF), itself composed of OPG118 and OPG134, thereby allowing the early genes transcription. Late transcription, and probably also intermediate transcription, require newly synthesized RNA polymerase. This Bos taurus (Bovine) protein is DNA-directed RNA polymerase 30 kDa polypeptide (OPG066).